We begin with the raw amino-acid sequence, 1254 residues long: Zinc finger protein BRUTUS (1254 aa).

A disordered region spans residues 1–40 (MATPLPDFETARGGGAVASSSTTVLPSSVSSSSSSSRPLP). Low complexity predominate over residues 19-40 (SSSTTVLPSSVSSSSSSSRPLP). The chain crosses the membrane as a helical span at residues 201 to 221 (FLCSIPVNMLAVFLPWISSSI). Residues 893–913 (GSPDSSSTETSKPSPQKDNDH) form a disordered region. A compositionally biased stretch (polar residues) spans 895–906 (PDSSSTETSKPS). The CHY-type zinc-finger motif lies at 999-1068 (PEKQIYGCEH…PICTTPSCDG (70 aa)). Residues cysteine 1006, histidine 1008, cysteine 1019, cysteine 1020, cysteine 1026, cysteine 1029, histidine 1030, histidine 1036, cysteine 1048, cysteine 1051, cysteine 1061, cysteine 1066, cysteine 1076, cysteine 1079, histidine 1090, cysteine 1091, cysteine 1094, cysteine 1097, histidine 1109, cysteine 1110, cysteine 1113, cysteine 1116, histidine 1124, and cysteine 1126 each contribute to the Zn(2+) site. Residues 1071-1134 (MAKHYCSICK…KCLEKSLETN (64 aa)) form a CTCHY-type zinc finger. The segment at 1135–1176 (CPICCEFLFTSSEAVRALPCGHYMHSACFQAYTCSHYTCPIC) adopts an RING-type; atypical zinc-finger fold.

In terms of assembly, interacts with the PYEL proteins bHLH115, bHLH104 and ILR3 in the nucleus. Binds zinc and iron ions. Expressed in cotyledons of seedlings, young leaves, developing and mature embryos, and other reproductive tissues including floral vasculature, funiculus, septum, and gynoecium valves.

The protein localises to the membrane. Its subcellular location is the nucleus. It participates in protein modification; protein ubiquitination. In terms of biological role, essential protein. Negatively regulates the response to iron deficiency and thus contributes to iron homeostasis. Exhibits E3 ubiquitin-protein ligase activity in vitro. Plays a role in root growth, rhizosphere acidification, and iron reductase activity in response to iron deprivation. Facilitates 26S proteasome-mediated degradation of PYEL proteins in the absence of iron. The polypeptide is Zinc finger protein BRUTUS (Arabidopsis thaliana (Mouse-ear cress)).